The primary structure comprises 348 residues: MKLSDFSFVLPENLIAKYPTQQRTASRLLHLDGKNGKVEHTMFADMLKFVEPGDLLVFNNTRVIPARLLGKKETGGQVEVLIERITSDTTALAHVRASKAPKPGTKLILEEKVNVTVTGRDDALFILQFDHDETVLTLLEAHGHMPLPPYIDRPDENSDKERYQTVYNEKPGAVAAPTAGLHFDDSILNALKEKGVNLAFVTLHVGAGTFQPVRVDNIQEHKMHAEFAEVPQDVVDAVLNTKANGKRVIAVGTTSVRSLESAAKASAERGDEQIIAPFNEDTEIFIYPGFEFKVVDAMFTNFHLPESTLMMLISAFAGKENVMNAYQEAIAKEYRFFSYGDAMFIERA.

It belongs to the QueA family. In terms of assembly, monomer.

The protein resides in the cytoplasm. The catalysed reaction is 7-aminomethyl-7-carbaguanosine(34) in tRNA + S-adenosyl-L-methionine = epoxyqueuosine(34) in tRNA + adenine + L-methionine + 2 H(+). It participates in tRNA modification; tRNA-queuosine biosynthesis. Transfers and isomerizes the ribose moiety from AdoMet to the 7-aminomethyl group of 7-deazaguanine (preQ1-tRNA) to give epoxyqueuosine (oQ-tRNA). The polypeptide is S-adenosylmethionine:tRNA ribosyltransferase-isomerase (Alteromonas mediterranea (strain DSM 17117 / CIP 110805 / LMG 28347 / Deep ecotype)).